A 177-amino-acid chain; its full sequence is Interleukin-10 (177 aa).

The signal sequence occupies residues 1–19 (MPSSSAVLCCLVFLAGVAA). Intrachain disulfides connect C31/C127 and C81/C133. Residue N135 is glycosylated (N-linked (GlcNAc...) asparagine).

The protein belongs to the IL-10 family. In terms of assembly, homodimer. Interacts with IL10RA and IL10RB.

It is found in the secreted. Major immune regulatory cytokine that acts on many cells of the immune system where it has profound anti-inflammatory functions, limiting excessive tissue disruption caused by inflammation. Mechanistically, IL10 binds to its heterotetrameric receptor comprising IL10RA and IL10RB leading to JAK1 and STAT2-mediated phosphorylation of STAT3. In turn, STAT3 translocates to the nucleus where it drives expression of anti-inflammatory mediators. Targets antigen-presenting cells (APCs) such as macrophages and monocytes and inhibits their release of pro-inflammatory cytokines including granulocyte-macrophage colony-stimulating factor /GM-CSF, granulocyte colony-stimulating factor/G-CSF, IL-1 alpha, IL-1 beta, IL-6, IL-8 and TNF-alpha. Also interferes with antigen presentation by reducing the expression of MHC-class II and co-stimulatory molecules, thereby inhibiting their ability to induce T cell activation. In addition, controls the inflammatory response of macrophages by reprogramming essential metabolic pathways including mTOR signaling. The sequence is that of Interleukin-10 (IL10) from Ovis aries (Sheep).